Consider the following 341-residue polypeptide: Glyceraldehyde-3-phosphate dehydrogenase (341 aa).

NAD(+)-binding positions include 11–12 (TI) and Gly109. 138–140 (SCN) serves as a coordination point for D-glyceraldehyde 3-phosphate. Residue Cys139 is the Nucleophile of the active site. Arg167 provides a ligand contact to NAD(+). Residues Thr169 and 192 to 193 (HA) contribute to the D-glyceraldehyde 3-phosphate site. Position 299 (Gln299) interacts with NAD(+).

The protein belongs to the glyceraldehyde-3-phosphate dehydrogenase family. Homotetramer.

It localises to the cytoplasm. It catalyses the reaction D-glyceraldehyde 3-phosphate + phosphate + NADP(+) = (2R)-3-phospho-glyceroyl phosphate + NADPH + H(+). It carries out the reaction D-glyceraldehyde 3-phosphate + phosphate + NAD(+) = (2R)-3-phospho-glyceroyl phosphate + NADH + H(+). The protein operates within carbohydrate degradation; glycolysis; pyruvate from D-glyceraldehyde 3-phosphate: step 1/5. The polypeptide is Glyceraldehyde-3-phosphate dehydrogenase (Picrophilus torridus (strain ATCC 700027 / DSM 9790 / JCM 10055 / NBRC 100828 / KAW 2/3)).